The sequence spans 695 residues: Putative ATP-dependent RNA helicase L540 (695 aa).

A Helicase ATP-binding domain is found at 53–219 (LSALENYQLV…FNSVDSTVID (167 aa)). Residue 66-73 (SSTGSGKS) participates in ATP binding. The DEAH box signature appears at 164–167 (DEAH). The region spanning 247-434 (LIEDLIHQQI…GINMMNQLMD (188 aa)) is the Helicase C-terminal domain.

This sequence belongs to the DEAD box helicase family. DEAH subfamily.

It localises to the virion. The enzyme catalyses ATP + H2O = ADP + phosphate + H(+). This chain is Putative ATP-dependent RNA helicase L540, found in Acanthamoeba polyphaga (Amoeba).